A 780-amino-acid polypeptide reads, in one-letter code: Tricorn protease-interacting factor F3 (780 aa).

Residues glutamate 101 and 230–234 contribute to the substrate site; that span reads GAMEN. Histidine 265 provides a ligand contact to Zn(2+). The active-site Proton acceptor is glutamate 266. Zn(2+) contacts are provided by histidine 269 and glutamate 288.

It belongs to the peptidase M1 family. In terms of assembly, part of the tricorn proteolytic complex. Zn(2+) serves as cofactor.

The protein localises to the cytoplasm. Proteases F1, F2 and F3 degrade oligopeptides produced by Tricorn (themselves probably produced by the proteasome), yielding free amino acids. This is Tricorn protease-interacting factor F3 (trf3) from Thermoplasma acidophilum (strain ATCC 25905 / DSM 1728 / JCM 9062 / NBRC 15155 / AMRC-C165).